The following is a 744-amino-acid chain: Putative pre-mRNA-splicing factor ATP-dependent RNA helicase DHX32 (744 aa).

An N-acetylmethionine modification is found at Met1. A disordered region spans residues 1–28 (MDEEELDHPNASPEKRYFPESLDSSDGD). The 199-residue stretch at 72-270 (MESLLQNQVV…RLIFEIHRSG (199 aa)) folds into the Helicase ATP-binding domain. 85 to 92 (GDSKCGKS) is an ATP binding site. Positions 185–188 (DDVH) match the DEAH box motif. One can recognise a Helicase C-terminal domain in the interval 258-438 (SVIRLIFEIH…SMVLFMKRVD (181 aa)).

It belongs to the DEAD box helicase family. DEAH subfamily.

It localises to the nucleus. Its subcellular location is the mitochondrion. It catalyses the reaction ATP + H2O = ADP + phosphate + H(+). This is Putative pre-mRNA-splicing factor ATP-dependent RNA helicase DHX32 (Dhx32) from Mus musculus (Mouse).